The following is a 500-amino-acid chain: NAD(P)H-quinone oxidoreductase chain 4, chloroplastic (500 aa).

Transmembrane regions (helical) follow at residues 4–24 (FPWL…MLFL), 35–55 (YTIC…CYNF), 87–107 (IGTI…AFPV), 113–130 (LFHF…GSFS), 134–154 (LLLF…LLSM), 167–187 (FILY…GISL), 211–231 (ILFY…IPLH), 242–262 (HYST…YGLV), 272–292 (AHSM…IYAA), 305–325 (IAYS…SITD), 330–350 (GAIL…FLAG), 386–406 (LALP…GIIT), 416–436 (ILII…LLSM), and 462–482 (LFLS…PDFV).

It belongs to the complex I subunit 4 family.

The protein resides in the plastid. It is found in the chloroplast thylakoid membrane. It carries out the reaction a plastoquinone + NADH + (n+1) H(+)(in) = a plastoquinol + NAD(+) + n H(+)(out). The enzyme catalyses a plastoquinone + NADPH + (n+1) H(+)(in) = a plastoquinol + NADP(+) + n H(+)(out). This is NAD(P)H-quinone oxidoreductase chain 4, chloroplastic from Nasturtium officinale (Watercress).